The following is a 635-amino-acid chain: Threonine--tRNA ligase (635 aa).

The 61-residue stretch at 1–61 folds into the TGS domain; sequence MVSIRLPDGS…DRDASLAIVT (61 aa). Residues 242 to 533 are catalytic; sequence DHRKLGKQLD…LIEHHAGAMP (292 aa). Zn(2+) contacts are provided by C333, H384, and H510.

The protein belongs to the class-II aminoacyl-tRNA synthetase family. In terms of assembly, homodimer. Requires Zn(2+) as cofactor.

The protein localises to the cytoplasm. It catalyses the reaction tRNA(Thr) + L-threonine + ATP = L-threonyl-tRNA(Thr) + AMP + diphosphate + H(+). Its function is as follows. Catalyzes the attachment of threonine to tRNA(Thr) in a two-step reaction: L-threonine is first activated by ATP to form Thr-AMP and then transferred to the acceptor end of tRNA(Thr). Also edits incorrectly charged L-seryl-tRNA(Thr). This Burkholderia orbicola (strain MC0-3) protein is Threonine--tRNA ligase.